A 917-amino-acid polypeptide reads, in one-letter code: Protein Ami (917 aa).

An N-terminal signal peptide occupies residues 1–30; that stretch reads MKKLVKSAVVFAGLVFIGTSATMITEKASA. In terms of domain architecture, N-acetylmuramoyl-L-alanine amidase spans 118-245; the sequence is KPEGIVIHET…YLGGTTHTDP (128 aa). The interval 262 to 917 is GW repeat region, necessary and sufficient for cell surface attachment; that stretch reads LINEKYKAMQ…KAANLSAKKQ (656 aa). GW domains are found at residues 279–358, 361–435, 440–519, 522–596, 601–679, 682–756, 761–840, and 843–917; these read YDKA…TFYT, MEKT…TTKY, MEKN…ATQY, and MEKN…AKKQ.

It in the N-terminal section; belongs to the N-acetylmuramoyl-L-alanine amidase 2 family.

The protein resides in the cell surface. It localises to the cell membrane. In terms of biological role, a bacteriolysin able to lyse both L.monocytogenes and S.aureus. This is Protein Ami from Listeria monocytogenes serotype 1/2a (strain EGD / Mackaness).